The chain runs to 433 residues: Serine hydroxymethyltransferase (433 aa).

Residues Leu-127 and 131–133 (GHL) each bind (6S)-5,6,7,8-tetrahydrofolate. Lys-236 is modified (N6-(pyridoxal phosphate)lysine).

It belongs to the SHMT family. In terms of assembly, homodimer. The cofactor is pyridoxal 5'-phosphate.

Its subcellular location is the cytoplasm. The enzyme catalyses (6R)-5,10-methylene-5,6,7,8-tetrahydrofolate + glycine + H2O = (6S)-5,6,7,8-tetrahydrofolate + L-serine. The protein operates within one-carbon metabolism; tetrahydrofolate interconversion. Its pathway is amino-acid biosynthesis; glycine biosynthesis; glycine from L-serine: step 1/1. Catalyzes the reversible interconversion of serine and glycine with tetrahydrofolate (THF) serving as the one-carbon carrier. This reaction serves as the major source of one-carbon groups required for the biosynthesis of purines, thymidylate, methionine, and other important biomolecules. Also exhibits THF-independent aldolase activity toward beta-hydroxyamino acids, producing glycine and aldehydes, via a retro-aldol mechanism. This Corynebacterium urealyticum (strain ATCC 43042 / DSM 7109) protein is Serine hydroxymethyltransferase.